Consider the following 179-residue polypeptide: Large ribosomal subunit protein uL5 (179 aa).

The protein belongs to the universal ribosomal protein uL5 family. Part of the 50S ribosomal subunit; part of the 5S rRNA/L5/L18/L25 subcomplex. Contacts the 5S rRNA and the P site tRNA. Forms a bridge to the 30S subunit in the 70S ribosome.

Functionally, this is one of the proteins that bind and probably mediate the attachment of the 5S RNA into the large ribosomal subunit, where it forms part of the central protuberance. In the 70S ribosome it contacts protein S13 of the 30S subunit (bridge B1b), connecting the 2 subunits; this bridge is implicated in subunit movement. Contacts the P site tRNA; the 5S rRNA and some of its associated proteins might help stabilize positioning of ribosome-bound tRNAs. This Clostridium perfringens (strain ATCC 13124 / DSM 756 / JCM 1290 / NCIMB 6125 / NCTC 8237 / Type A) protein is Large ribosomal subunit protein uL5.